Here is a 185-residue protein sequence, read N- to C-terminus: Ribosome-recycling factor (185 aa).

The protein belongs to the RRF family.

It is found in the cytoplasm. In terms of biological role, responsible for the release of ribosomes from messenger RNA at the termination of protein biosynthesis. May increase the efficiency of translation by recycling ribosomes from one round of translation to another. This chain is Ribosome-recycling factor, found in Shewanella sp. (strain ANA-3).